A 309-amino-acid polypeptide reads, in one-letter code: tRNA dimethylallyltransferase (309 aa).

Residue 8-15 (GPTATGKS) participates in ATP binding. Substrate is bound at residue 10-15 (TATGKS). The interval 33–36 (DSRQ) is interaction with substrate tRNA.

Belongs to the IPP transferase family. Monomer. Requires Mg(2+) as cofactor.

The enzyme catalyses adenosine(37) in tRNA + dimethylallyl diphosphate = N(6)-dimethylallyladenosine(37) in tRNA + diphosphate. Functionally, catalyzes the transfer of a dimethylallyl group onto the adenine at position 37 in tRNAs that read codons beginning with uridine, leading to the formation of N6-(dimethylallyl)adenosine (i(6)A). The sequence is that of tRNA dimethylallyltransferase from Trichodesmium erythraeum (strain IMS101).